The following is a 154-amino-acid chain: MILMRRREDVMPVCELRHATTEDTDSVYALICELLKNELDYQAFRDGFAANLLDPNVHYRLALRNGEVVGMISLHMQFHLHHANWIGEIQELVVLPPMRGQKIGSQLLAWAEEEARQAGAELTELSTNIKRRDAHRFYLREGYKQSHFRFTKAL.

An N-acetyltransferase domain is found at 14-154 (CELRHATTED…QSHFRFTKAL (141 aa)).

Homodimer. A divalent metal cation is required as a cofactor.

It carries out the reaction aminomethylphosphonate + acetyl-CoA = 2-N-acetamidomethylphosphonate + CoA. It catalyses the reaction (S)-1-aminoethylphosphonate + acetyl-CoA = [(1S)-1-acetamidoethyl]phosphonate + CoA. Aminoalkylphosphonate N-acetyltransferase which is able to acetylate a range of aminoalkylphosphonic acids, including (S)-1-aminoethylphosphonate ((S)-1AEP) and 2-aminoethylphosphonate, using acetyl-CoA as acetyl donor. Its physiological role in S.typhimurium is unclear. However, by acetylating (S)-1AEP, PhnO would protect against the deleterious effects of (S)-1AEP, a structural analog of D-alanine that has antibacterial properties. The chain is Aminoalkylphosphonate N-acetyltransferase from Salmonella typhimurium (strain LT2 / SGSC1412 / ATCC 700720).